Consider the following 84-residue polypeptide: M-myrmeciitoxin-Mb2a (84 aa).

Positions 1–21 (MKLSCLLLTLAIIFVLTIVHA) are cleaved as a signal peptide. Residues 22–48 (PNVKAKALADPESDAVGFADAVGEADP) constitute a propeptide that is removed on maturation.

The protein belongs to the formicidae venom precursor-01 superfamily. Ant pilosulin family. Expressed by the venom gland.

The protein localises to the secreted. Shows activity against E.coli and S.aureus (MIC&lt;6.25 uM), moderate activity against P.aeruginosa (MIC&lt;25 uM), weak activity against B.subtilis (MIC&lt;50 uM), and has no effect against L.garvieae, C.albicans, and S.cerevisiae. Has no hemolytic nor cytolytic activity. Causes an IgE-independent histamine release. The chain is M-myrmeciitoxin-Mb2a from Myrmecia banksi (Jack jumper ant).